Consider the following 95-residue polypeptide: Integration host factor subunit beta (95 aa).

It belongs to the bacterial histone-like protein family. In terms of assembly, heterodimer of an alpha and a beta chain.

In terms of biological role, this protein is one of the two subunits of integration host factor, a specific DNA-binding protein that functions in genetic recombination as well as in transcriptional and translational control. This is Integration host factor subunit beta from Shewanella pealeana (strain ATCC 700345 / ANG-SQ1).